We begin with the raw amino-acid sequence, 387 residues long: Lipid-A-disaccharide synthase (387 aa).

It belongs to the LpxB family.

The enzyme catalyses a lipid X + a UDP-2-N,3-O-bis[(3R)-3-hydroxyacyl]-alpha-D-glucosamine = a lipid A disaccharide + UDP + H(+). Its pathway is bacterial outer membrane biogenesis; LPS lipid A biosynthesis. Functionally, condensation of UDP-2,3-diacylglucosamine and 2,3-diacylglucosamine-1-phosphate to form lipid A disaccharide, a precursor of lipid A, a phosphorylated glycolipid that anchors the lipopolysaccharide to the outer membrane of the cell. This chain is Lipid-A-disaccharide synthase, found in Glaesserella parasuis serovar 5 (strain SH0165) (Haemophilus parasuis).